The primary structure comprises 89 residues: UPF0223 protein BCE_4008 (89 aa).

This sequence belongs to the UPF0223 family.

The sequence is that of UPF0223 protein BCE_4008 from Bacillus cereus (strain ATCC 10987 / NRS 248).